A 93-amino-acid polypeptide reads, in one-letter code: Small ribosomal subunit protein uS19 (93 aa).

Belongs to the universal ribosomal protein uS19 family.

In terms of biological role, protein S19 forms a complex with S13 that binds strongly to the 16S ribosomal RNA. In Mycobacteroides abscessus (strain ATCC 19977 / DSM 44196 / CCUG 20993 / CIP 104536 / JCM 13569 / NCTC 13031 / TMC 1543 / L948) (Mycobacterium abscessus), this protein is Small ribosomal subunit protein uS19.